A 434-amino-acid chain; its full sequence is Pre-B-cell leukemia transcription factor 3 (434 aa).

The disordered stretch occupies residues 20–41 (SVQGGMALPPPPHGHEGADGDG). Residues 32–41 (HGHEGADGDG) are compositionally biased toward basic and acidic residues. The PBC domain occupies 41 to 234 (GRKQDIGDIL…VMILRSRFLD (194 aa)). A PBC-A region spans residues 48–127 (DILHQIMTIT…EGVSGPEKGG (80 aa)). The segment at 130–234 (AAAAAAAAAS…VMILRSRFLD (105 aa)) is PBC-B. Residues 235–297 (ARRKRRNFSK…NKRIRYKKNI (63 aa)) constitute a DNA-binding region (homeobox; TALE-type). Low complexity predominate over residues 326–341 (NQTNSPTTPNSGSSGS). Disordered regions lie at residues 326–349 (NQTN…NSGD) and 405–434 (ANGG…DTSN). A compositionally biased stretch (polar residues) spans 405–422 (ANGGWQDATTPSSVTSPT).

The protein belongs to the TALE/PBX homeobox family. In terms of assembly, interacts with PBXIP1.

It localises to the nucleus. Transcriptional activator that binds the sequence 5'-ATCAATCAA-3'. The sequence is that of Pre-B-cell leukemia transcription factor 3 (Pbx3) from Mus musculus (Mouse).